Consider the following 417-residue polypeptide: Serine protease hepsin (417 aa).

Topologically, residues 1-23 are cytoplasmic; that stretch reads MAQKEGGRTVPCCSRPKVAALTA. The helical; Signal-anchor for type II membrane protein transmembrane segment at 24–44 threads the bilayer; that stretch reads GTLLLLTAIGAASWAIVAVLL. Residues 45 to 417 lie on the Extracellular side of the membrane; sequence RSDQEPLYPV…SEASGMVTQL (373 aa). One can recognise an SRCR domain in the interval 54 to 151; it reads VQVSSADARL…RGRFLATICQ (98 aa). Disulfide bonds link Cys77–Cys140, Cys90–Cys150, Cys119–Cys138, Cys153–Cys277, Cys188–Cys204, Cys291–Cys359, Cys322–Cys338, and Cys349–Cys381. Asn112 carries N-linked (GlcNAc...) asparagine glycosylation. The 243-residue stretch at 163–405 folds into the Peptidase S1 domain; that stretch reads IVGGRDTSLG…FREWIFQAIK (243 aa). Residues His203 and Asp257 each act as charge relay system in the active site. The active-site Charge relay system is the Ser353.

Belongs to the peptidase S1 family.

The protein resides in the membrane. It carries out the reaction Cleavage after basic amino-acid residues, with Arg strongly preferred to Lys.. Functionally, plays an essential role in cell growth and maintenance of cell morphology. May mediate the activating cleavage of HGF and MST1/HGFL. Plays a role in the proteolytic processing of ACE2. The sequence is that of Serine protease hepsin (HPN) from Pongo abelii (Sumatran orangutan).